We begin with the raw amino-acid sequence, 338 residues long: LINE-1 retrotransposable element ORF1 protein (338 aa).

The segment at 1 to 40 (MGKKQNRKTGNSKTQSASPPPKERSSSPATEQSWMENDFD) is disordered. Composition is skewed to polar residues over residues 8-17 (KTGNSKTQSA) and 26-35 (SSPATEQSWM). A coiled-coil region spans residues 49–153 (RSNYSELRED…QSLQEIWDYV (105 aa)). Residues 157-252 (NLRLIGVPES…KGKPIRLTAD (96 aa)) form an RNA recognition motif (RRM) domain region. The segment at 253 to 317 (LSAETLQARR…TTRPALKELL (65 aa)) is C-terminal domain (CTD).

The protein belongs to the transposase 22 family. Homotrimer (via coiled coil domain). May also form larger homooligomers. May interact with DDX39A, HNRNPA1, SERBP1 and YBX1. Interacts with TEX19 and UBR2. Interacts with MOV10. Interacts with APOBEC3D; this interaction inhibits LINE-1 retrotransposition. Post-translationally, polyubiquitinated, probably by UBR2, which induces its degradation.

The protein resides in the nucleus. It localises to the nucleolus. The protein localises to the cytoplasm. It is found in the cytoplasmic ribonucleoprotein granule. Its subcellular location is the stress granule. Its function is as follows. Nucleic acid-binding protein which is essential for retrotransposition of LINE-1 elements in the genome. Functions as a nucleic acid chaperone binding its own transcript and therefore preferentially mobilizing the transcript from which they are encoded. This is LINE-1 retrotransposable element ORF1 protein (L1RE1) from Homo sapiens (Human).